We begin with the raw amino-acid sequence, 228 residues long: Demethylmenaquinone methyltransferase (228 aa).

Residues threonine 62, aspartate 80, 100–101 (DA), and serine 117 each bind S-adenosyl-L-methionine.

It belongs to the class I-like SAM-binding methyltransferase superfamily. MenG/UbiE family.

It catalyses the reaction a 2-demethylmenaquinol + S-adenosyl-L-methionine = a menaquinol + S-adenosyl-L-homocysteine + H(+). It functions in the pathway quinol/quinone metabolism; menaquinone biosynthesis; menaquinol from 1,4-dihydroxy-2-naphthoate: step 2/2. Its function is as follows. Methyltransferase required for the conversion of demethylmenaquinol (DMKH2) to menaquinol (MKH2). This chain is Demethylmenaquinone methyltransferase, found in Mycolicibacterium gilvum (strain PYR-GCK) (Mycobacterium gilvum (strain PYR-GCK)).